Here is a 1011-residue protein sequence, read N- to C-terminus: DNA-directed RNA polymerase 2, chloroplastic/mitochondrial (1011 aa).

Residues 307–326 are disordered; that stretch reads KGDDNEESGGVENETSMKEQ. Residues D712, K787, and D944 contribute to the active site.

This sequence belongs to the phage and mitochondrial RNA polymerase family. As to quaternary structure, interacts with NIP1 and NIP2.

It localises to the plastid. Its subcellular location is the chloroplast. It is found in the mitochondrion. The enzyme catalyses RNA(n) + a ribonucleoside 5'-triphosphate = RNA(n+1) + diphosphate. DNA-dependent RNA polymerase catalyzes the transcription of DNA into RNA using the four ribonucleoside triphosphates as substrates. The chain is DNA-directed RNA polymerase 2, chloroplastic/mitochondrial (RPOT2) from Arabidopsis thaliana (Mouse-ear cress).